The primary structure comprises 480 residues: UDP-N-acetylmuramate--L-alanine ligase (480 aa).

ATP is bound at residue 129–135 (GSHGKTT).

This sequence belongs to the MurCDEF family.

The protein resides in the cytoplasm. It carries out the reaction UDP-N-acetyl-alpha-D-muramate + L-alanine + ATP = UDP-N-acetyl-alpha-D-muramoyl-L-alanine + ADP + phosphate + H(+). It functions in the pathway cell wall biogenesis; peptidoglycan biosynthesis. In terms of biological role, cell wall formation. The polypeptide is UDP-N-acetylmuramate--L-alanine ligase (Syntrophus aciditrophicus (strain SB)).